Consider the following 618-residue polypeptide: Ubiquitin carboxyl-terminal hydrolase 2 (618 aa).

Residues Met-1 to Glu-213 are necessary for interaction with MDM4. 2 disordered regions span residues Val-54 to Gly-112 and Arg-246 to Lys-274. A compositionally biased stretch (basic and acidic residues) spans Lys-90–Glu-100. Polar residues predominate over residues Gly-255 to Lys-274. One can recognise a USP domain in the interval Ala-280–Ala-612. Cys-289 (nucleophile) is an active-site residue. A necessary for interaction with MDM4 region spans residues Tyr-416–Lys-516. Zn(2+) is bound by residues Cys-438, Cys-441, Cys-489, and Cys-492. Residue His-570 is the Proton acceptor of the active site.

The protein belongs to the peptidase C19 family. USP2 subfamily. In terms of assembly, homooligomer. Found in trimeric complex with MDM2 and MDM4 and USP2. Interacts with CCND1; the interaction is direct and promotes its stabilization by antagonizing ubiquitin-dependent degradation. Interacts (via N-terminus and C-terminus) with MDM2. Interacts with MDM4. Interacts with PER1. Interacts with KCNQ1; counteracts the NEDD4L-specific down-regulation of I(Ks) and restores plasma membrane localization of KCNQ1. Isoform 4: Interacts with NHERF4 and CLTC. As to expression, expressed in mesangial cells of the kidney. Isoform 1 and isoform 2 are expressed in elongated spermatids; the shorter form appearing earlier than the longer form (at protein level). Isoform 1 and isoform 2 are expressed in early round spermatids of the testis. Isoform 1 is expressed in muscle and heart. Isoform 2 is expressed in muscle, lung, heart, brain, liver and ovary. During muscle differentiation, isoform 1 expression increases before the onset of membrane fusion and decreases as the myogenic processes proceeded; un counterpart, isoform 2 expression remains low until the burst of membrane fusion but increases thereafter.

Its subcellular location is the cytoplasm. It is found in the perinuclear region. It localises to the nucleus. The protein localises to the membrane. It carries out the reaction Thiol-dependent hydrolysis of ester, thioester, amide, peptide and isopeptide bonds formed by the C-terminal Gly of ubiquitin (a 76-residue protein attached to proteins as an intracellular targeting signal).. With respect to regulation, cleavage is inhibited by ubiquitin in a dosage-dependent manner. Cleavage is blocked by ubiquitin aldehyde. Its function is as follows. Hydrolase that deubiquitinates polyubiquitinated target proteins such as MDM2, MDM4 and CCND1. Isoform 1 and isoform 2 possess both ubiquitin-specific peptidase and isopeptidase activities. Deubiquitinates MDM2 without reversing MDM2-mediated p53/TP53 ubiquitination and thus indirectly promotes p53/TP53 degradation and limits p53 activity. Has no deubiquitinase activity against p53/TP53. Prevents MDM2-mediated degradation of MDM4. Plays a role in the G1/S cell-cycle progression in normal and cancer cells. Regulates the circadian clock by modulating its intrinsic circadian rhythm and its capacity to respond to external cues. Associates with clock proteins and deubiquitinates core clock component PER1 but does not affect its overall stability. Regulates the nucleocytoplasmic shuttling and nuclear retention of PER1 and its repressive role on the clock transcription factors CLOCK and BMAL1. Plays a role in the regulation of myogenic differentiation of embryonic muscle cells. In terms of biological role, circadian clock output effector that regulates Ca(2+) absorption in the small intestine. Probably functions by regulating protein levels of the membrane scaffold protein NHERF4 in a rhythmic manner, and is therefore likely to control Ca(2+) membrane permeability mediated by the Ca(2+) channel TRPV6 in the intestine. The polypeptide is Ubiquitin carboxyl-terminal hydrolase 2 (Usp2) (Rattus norvegicus (Rat)).